The primary structure comprises 598 residues: UvrABC system protein C (598 aa).

The GIY-YIG domain occupies 14 to 91 (DSPGCYLHKD…IQKNMPKYNI (78 aa)). The region spanning 196 to 231 (DKIIEDLRSKMLAASEEMAFERAAEYRDLISGIATM) is the UVR domain.

Belongs to the UvrC family. Interacts with UvrB in an incision complex.

The protein localises to the cytoplasm. Its function is as follows. The UvrABC repair system catalyzes the recognition and processing of DNA lesions. UvrC both incises the 5' and 3' sides of the lesion. The N-terminal half is responsible for the 3' incision and the C-terminal half is responsible for the 5' incision. In Streptococcus pyogenes serotype M12 (strain MGAS2096), this protein is UvrABC system protein C.